The primary structure comprises 161 residues: Globin CTT-VIIB-6 (161 aa).

The N-terminal stretch at Met1–Ala16 is a signal peptide. Positions Pro18–Leu161 constitute a Globin domain. Residues His76 and His111 each coordinate heme b.

It belongs to the globin family. In terms of assembly, homodimer.

The sequence is that of Globin CTT-VIIB-6 (CTT-7B6) from Chironomus thummi thummi (Midge).